We begin with the raw amino-acid sequence, 315 residues long: Probable cell division protein WhiA (315 aa).

A DNA-binding region (H-T-H motif) is located at residues N275 to E309.

Belongs to the WhiA family.

Its function is as follows. Involved in cell division and chromosome segregation. In Brevibacillus brevis (strain 47 / JCM 6285 / NBRC 100599), this protein is Probable cell division protein WhiA.